A 242-amino-acid polypeptide reads, in one-letter code: Small ribosomal subunit protein uS2 (242 aa).

Belongs to the universal ribosomal protein uS2 family.

This Aeromonas hydrophila subsp. hydrophila (strain ATCC 7966 / DSM 30187 / BCRC 13018 / CCUG 14551 / JCM 1027 / KCTC 2358 / NCIMB 9240 / NCTC 8049) protein is Small ribosomal subunit protein uS2.